The sequence spans 190 residues: Segregation and condensation protein B (190 aa).

Belongs to the ScpB family. Homodimer. Homodimerization may be required to stabilize the binding of ScpA to the Smc head domains. Component of a cohesin-like complex composed of ScpA, ScpB and the Smc homodimer, in which ScpA and ScpB bind to the head domain of Smc. The presence of the three proteins is required for the association of the complex with DNA.

It is found in the cytoplasm. In terms of biological role, participates in chromosomal partition during cell division. May act via the formation of a condensin-like complex containing Smc and ScpA that pull DNA away from mid-cell into both cell halves. The protein is Segregation and condensation protein B of Bacillus cereus (strain ATCC 14579 / DSM 31 / CCUG 7414 / JCM 2152 / NBRC 15305 / NCIMB 9373 / NCTC 2599 / NRRL B-3711).